A 300-amino-acid polypeptide reads, in one-letter code: Manganese-binding lipoprotein MntA (300 aa).

A signal peptide spans 1–19 (MKKVCFSFVIMVIALIAAG). Cysteine 20 carries N-palmitoyl cysteine lipidation. Residue cysteine 20 is the site of S-diacylglycerol cysteine attachment. Mn(2+) contacts are provided by histidine 68, histidine 130, glutamate 196, and aspartate 271.

Belongs to the bacterial solute-binding protein 9 family.

It is found in the cell membrane. In terms of biological role, probably part of ATP-binding cassette (ABC) transport system MntABCD involved in manganese import. Binds manganese and delivers it to the membrane permease for translocation into the cytoplasm. This is Manganese-binding lipoprotein MntA (mntA) from Halalkalibacterium halodurans (strain ATCC BAA-125 / DSM 18197 / FERM 7344 / JCM 9153 / C-125) (Bacillus halodurans).